A 543-amino-acid chain; its full sequence is Carboxypeptidase Y homolog A (543 aa).

An N-terminal signal peptide occupies residues 1–17 (MKFLTTGLLATAALAAA). A propeptide spanning residues 18-124 (QEQQVLQAED…KLHNYDLRVK (107 aa)) is cleaved from the precursor. Cystine bridges form between Cys179-Cys419, Cys313-Cys327, Cys337-Cys360, Cys344-Cys353, and Cys382-Cys389. N-linked (GlcNAc...) asparagine glycosylation is present at Asn210. Ser266 is a catalytic residue. The active site involves Asp458. Asn509 is a glycosylation site (N-linked (GlcNAc...) asparagine). The active site involves His520.

This sequence belongs to the peptidase S10 family.

Its subcellular location is the vacuole. The catalysed reaction is Release of a C-terminal amino acid with broad specificity.. Its function is as follows. Vacuolar carboxypeptidase involved in degradation of small peptides. Digests preferentially peptides containing an aliphatic or hydrophobic residue in P1' position, as well as methionine, leucine or phenylalanine in P1 position of ester substrate. This is Carboxypeptidase Y homolog A (CPYA) from Trichophyton tonsurans (Scalp ringworm fungus).